Reading from the N-terminus, the 423-residue chain is Mannose-6-phosphate isomerase (423 aa).

Ala2 carries the N-acetylalanine modification. Phosphoserine is present on residues Ser102 and Ser108. 4 residues coordinate Zn(2+): Gln110, His112, Glu137, and His276. The active site involves Arg295.

The protein belongs to the mannose-6-phosphate isomerase type 1 family. Zn(2+) serves as cofactor.

The protein localises to the cytoplasm. The catalysed reaction is D-mannose 6-phosphate = D-fructose 6-phosphate. It participates in nucleotide-sugar biosynthesis; GDP-alpha-D-mannose biosynthesis; alpha-D-mannose 1-phosphate from D-fructose 6-phosphate: step 1/2. In terms of biological role, isomerase that catalyzes the interconversion of fructose-6-P and mannose-6-P and has a critical role in the supply of D-mannose derivatives required for many eukaryotic glycosylation reactions. The protein is Mannose-6-phosphate isomerase of Rattus norvegicus (Rat).